Consider the following 75-residue polypeptide: Small ribosomal subunit protein bS18 (75 aa).

The protein belongs to the bacterial ribosomal protein bS18 family. In terms of assembly, part of the 30S ribosomal subunit. Forms a tight heterodimer with protein bS6.

Functionally, binds as a heterodimer with protein bS6 to the central domain of the 16S rRNA, where it helps stabilize the platform of the 30S subunit. The protein is Small ribosomal subunit protein bS18 of Methylobacillus flagellatus (strain ATCC 51484 / DSM 6875 / VKM B-1610 / KT).